We begin with the raw amino-acid sequence, 141 residues long: Galactose-6-phosphate isomerase subunit LacA (141 aa).

This sequence belongs to the LacAB/RpiB family. In terms of assembly, heteromultimeric protein consisting of LacA and LacB.

It catalyses the reaction aldehydo-D-galactose 6-phosphate = keto-D-tagatose 6-phosphate. Its pathway is carbohydrate metabolism; D-galactose 6-phosphate degradation; D-tagatose 6-phosphate from D-galactose 6-phosphate: step 1/1. In Streptococcus pneumoniae (strain Taiwan19F-14), this protein is Galactose-6-phosphate isomerase subunit LacA.